A 116-amino-acid chain; its full sequence is Large ribosomal subunit protein bL19 (116 aa).

Belongs to the bacterial ribosomal protein bL19 family.

This protein is located at the 30S-50S ribosomal subunit interface and may play a role in the structure and function of the aminoacyl-tRNA binding site. The protein is Large ribosomal subunit protein bL19 of Fusobacterium nucleatum subsp. nucleatum (strain ATCC 25586 / DSM 15643 / BCRC 10681 / CIP 101130 / JCM 8532 / KCTC 2640 / LMG 13131 / VPI 4355).